The primary structure comprises 570 residues: Putative ABC transporter ATP-binding protein SACOL2708 (570 aa).

ABC transporter domains follow at residues 6–247 and 304–537; these read ISFK…GIRE and LELN…ASLR. Residues 40 to 47 and 338 to 345 each bind ATP; these read GASGSGKS and GHNGAGKS.

This sequence belongs to the ABC transporter superfamily.

Its subcellular location is the cell membrane. Its function is as follows. Probably part of an ABC transporter complex. Responsible for energy coupling to the transport system. The chain is Putative ABC transporter ATP-binding protein SACOL2708 from Staphylococcus aureus (strain COL).